The sequence spans 476 residues: Carbamoyl phosphate synthase arginine-specific small chain (476 aa).

A mitochondrion-targeting transit peptide spans 1–24 (MFSHLLKPAARSAGLLGHVNRRYL). Positions 228 to 415 (HVALIDCGVK…IQNVQRYKDH (188 aa)) constitute a Glutamine amidotransferase type-1 domain. Catalysis depends on Cys-304, which acts as the Nucleophile. Catalysis depends on residues His-388 and Glu-390.

It belongs to the CarA family. As to quaternary structure, heterodimer composed of 2 chains; the small (or glutamine) chain promotes the hydrolysis of glutamine to ammonia, which is used by the large (or ammonia) chain to synthesize carbamoyl phosphate.

Its subcellular location is the mitochondrion matrix. It carries out the reaction hydrogencarbonate + L-glutamine + 2 ATP + H2O = carbamoyl phosphate + L-glutamate + 2 ADP + phosphate + 2 H(+). The enzyme catalyses L-glutamine + H2O = L-glutamate + NH4(+). It participates in amino-acid biosynthesis; L-arginine biosynthesis; carbamoyl phosphate from bicarbonate: step 1/1. In terms of biological role, small subunit of the arginine-specific carbamoyl phosphate synthase (CPSase). CPSase catalyzes the formation of carbamoyl phosphate from the ammonia moiety of glutamine, carbonate, and phosphate donated by ATP, the first step of the arginine biosynthetic pathway. The small subunit (glutamine amidotransferase) binds and cleaves glutamine to supply the large subunit with the substrate ammonia. The protein is Carbamoyl phosphate synthase arginine-specific small chain (CPA1) of Phaeosphaeria nodorum (strain SN15 / ATCC MYA-4574 / FGSC 10173) (Glume blotch fungus).